The primary structure comprises 55 residues: Ferredoxin (55 aa).

4Fe-4S ferredoxin-type domains are found at residues 2–26 (YKITDECIACGSCADQCPVEAISEG) and 27–55 (SIYEIDEALCTDCGACADQCPVEAIVPED). Cys-8, Cys-11, Cys-14, Cys-18, Cys-36, Cys-39, Cys-42, and Cys-46 together coordinate [4Fe-4S] cluster.

The cofactor is [4Fe-4S] cluster.

In terms of biological role, ferredoxins are iron-sulfur proteins that transfer electrons in a wide variety of metabolic reactions. This chain is Ferredoxin, found in Butyribacterium methylotrophicum.